The following is a 147-amino-acid chain: MRLVVQRVTSASVKVEEEITGAINEGYMVLVGVTHEDTEEDVHYLADKLAHLRIFEDENGKMNHSLLDVKGSVLSVSQFTLYGDTRKGRRPNFMKAAKPDAANALYECFNKALREKGIHVETGRFGAMMDVSLTNSGPVTIWMDSKE.

Residues 137–138 (GP) carry the Gly-cisPro motif, important for rejection of L-amino acids motif.

The protein belongs to the DTD family. In terms of assembly, homodimer.

It localises to the cytoplasm. The enzyme catalyses glycyl-tRNA(Ala) + H2O = tRNA(Ala) + glycine + H(+). The catalysed reaction is a D-aminoacyl-tRNA + H2O = a tRNA + a D-alpha-amino acid + H(+). Functionally, an aminoacyl-tRNA editing enzyme that deacylates mischarged D-aminoacyl-tRNAs. Also deacylates mischarged glycyl-tRNA(Ala), protecting cells against glycine mischarging by AlaRS. Acts via tRNA-based rather than protein-based catalysis; rejects L-amino acids rather than detecting D-amino acids in the active site. By recycling D-aminoacyl-tRNA to D-amino acids and free tRNA molecules, this enzyme counteracts the toxicity associated with the formation of D-aminoacyl-tRNA entities in vivo and helps enforce protein L-homochirality. The polypeptide is D-aminoacyl-tRNA deacylase (Bacillus pumilus (strain SAFR-032)).